The sequence spans 167 residues: SsrA-binding protein (167 aa).

The segment at 139 to 167 (QAHDKRHAEKEREWQRDKQRIMRAHNRNA) is disordered. A compositionally biased stretch (basic and acidic residues) spans 144-158 (RHAEKEREWQRDKQR).

This sequence belongs to the SmpB family.

Its subcellular location is the cytoplasm. Functionally, required for rescue of stalled ribosomes mediated by trans-translation. Binds to transfer-messenger RNA (tmRNA), required for stable association of tmRNA with ribosomes. tmRNA and SmpB together mimic tRNA shape, replacing the anticodon stem-loop with SmpB. tmRNA is encoded by the ssrA gene; the 2 termini fold to resemble tRNA(Ala) and it encodes a 'tag peptide', a short internal open reading frame. During trans-translation Ala-aminoacylated tmRNA acts like a tRNA, entering the A-site of stalled ribosomes, displacing the stalled mRNA. The ribosome then switches to translate the ORF on the tmRNA; the nascent peptide is terminated with the 'tag peptide' encoded by the tmRNA and targeted for degradation. The ribosome is freed to recommence translation, which seems to be the essential function of trans-translation. The polypeptide is SsrA-binding protein (Xylella fastidiosa (strain M12)).